A 255-amino-acid chain; its full sequence is Hydroxyacylglutathione hydrolase (255 aa).

Zn(2+)-binding residues include H56, H58, D60, H61, H114, D133, and H171.

This sequence belongs to the metallo-beta-lactamase superfamily. Glyoxalase II family. In terms of assembly, monomer. Requires Zn(2+) as cofactor.

It carries out the reaction an S-(2-hydroxyacyl)glutathione + H2O = a 2-hydroxy carboxylate + glutathione + H(+). The protein operates within secondary metabolite metabolism; methylglyoxal degradation; (R)-lactate from methylglyoxal: step 2/2. In terms of biological role, thiolesterase that catalyzes the hydrolysis of S-D-lactoyl-glutathione to form glutathione and D-lactic acid. The sequence is that of Hydroxyacylglutathione hydrolase from Ruegeria pomeroyi (strain ATCC 700808 / DSM 15171 / DSS-3) (Silicibacter pomeroyi).